Reading from the N-terminus, the 39-residue chain is Contryphan-Cal4 (39 aa).

Positions 1–20 (MTRTAVLLLTLLFLVAMAAS) are cleaved as a signal peptide. C29 and C35 are joined by a disulfide.

Expressed by the venom duct.

It localises to the secreted. In terms of biological role, probable neurotoxin. This is Contryphan-Cal4 from Californiconus californicus (California cone).